We begin with the raw amino-acid sequence, 431 residues long: Mediator of RNA polymerase II transcription subunit 2 (431 aa).

Serine 6 bears the Phosphoserine mark. Over residues 105–140 the composition is skewed to basic and acidic residues; sequence GKEKEKEREEAEKKRAEQENMRKVREQEELKKRQEL. The tract at residues 105–178 is disordered; that stretch reads GKEKEKEREE…ANTTDANGSK (74 aa). Residues 143–152 are compositionally biased toward low complexity; it reads ASQQQQLQQN. A compositionally biased stretch (polar residues) spans 162 to 178; that stretch reads NFSTTAPANTTDANGSK. A Phosphoserine; by CDK8 modification is found at serine 208. The interval 284 to 399 is disordered; that stretch reads NNINSTKNGK…GDNPPPADNG (116 aa). A compositionally biased stretch (basic and acidic residues) spans 304–313; that stretch reads NGDEKNKNNN. Residues 318-365 show a composition bias toward low complexity; sequence NNNNSSEKNNNNNNNNNNNNDDNGNNNNNNSGNDNNNTTNNDSNNKNN. The segment covering 366–387 has biased composition (polar residues); sequence SITTGNDNENIVNNDLPTTVVS.

Belongs to the mediator complex subunit 2 family. As to quaternary structure, component of the Mediator complex, which is composed of at least 21 subunits that form three structurally distinct submodules. The Mediator head module contains MED6, MED8, MED11, SRB4/MED17, SRB5/MED18, ROX3/MED19, SRB2/MED20 and SRB6/MED22, the middle module contains MED1, MED4, NUT1/MED5, MED7, CSE2/MED9, NUT2/MED10, SRB7/MED21 and SOH1/MED31, and the tail module contains MED2, PGD1/MED3, RGR1/MED14, GAL11/MED15 and SIN4/MED16. The head and the middle modules interact directly with RNA polymerase II, whereas the elongated tail module interacts with gene-specific regulatory proteins.

The protein localises to the nucleus. In terms of biological role, component of the Mediator complex, a coactivator involved in the regulated transcription of nearly all RNA polymerase II-dependent genes. Mediator functions as a bridge to convey information from gene-specific regulatory proteins to the basal RNA polymerase II transcription machinery. The Mediator complex, having a compact conformation in its free form, is recruited to promoters by direct interactions with regulatory proteins and serves for the assembly of a functional preinitiation complex with RNA polymerase II and the general transcription factors. The Mediator complex unfolds to an extended conformation and partially surrounds RNA polymerase II, specifically interacting with the unphosphorylated form of the C-terminal domain (CTD) of RNA polymerase II. The Mediator complex dissociates from the RNA polymerase II holoenzyme and stays at the promoter when transcriptional elongation begins. This is Mediator of RNA polymerase II transcription subunit 2 (MED2) from Saccharomyces cerevisiae (strain ATCC 204508 / S288c) (Baker's yeast).